The primary structure comprises 516 residues: Homeobox protein 6 (516 aa).

Over residues 22-31 (NYDFDNKNNS) the composition is skewed to low complexity. 3 disordered regions span residues 22 to 140 (NYDF…PNCN), 200 to 256 (SLNN…SSPS), and 268 to 348 (DEND…NNGD). Gly residues predominate over residues 32–41 (IGGGGGGGGS). Composition is skewed to low complexity over residues 42-59 (SSSRSSSSRSSSNRSSSG), 66-78 (SNSSSSINNIINS), and 101-132 (TTTTTTTTTTTTTTTTTKNENISSSESENSSS). The segment covering 284-346 (NNNNNNNNNN…NNNNTNTNNN (63 aa)) has biased composition (low complexity). DNA-binding regions (homeobox) lie at residues 362–421 (KSGQ…SKSG) and 424–483 (SYAK…NKLS). Residues 483 to 516 (SSKAIQDKDNQDNDNNNSNNNENNDDSYSDEGLF) are disordered. Residues 495 to 504 (NDNNNSNNNE) show a composition bias toward low complexity. The segment covering 505 to 516 (NNDDSYSDEGLF) has biased composition (acidic residues).

It is found in the nucleus. Putative transcription factor. The polypeptide is Homeobox protein 6 (hbx6) (Dictyostelium discoideum (Social amoeba)).